Reading from the N-terminus, the 239-residue chain is IkB-like protein (239 aa).

4 ANK repeats span residues 48 to 80 (SKITVFMWICIYGRLDFLRFLFKQESYPGEIIS), 87 to 118 (DGNSVWHYLAEKKNHLLLEEVLEYFGKIGIKV), 124 to 153 (NGITPVMKAAMRGRTLSVLSLIKYGANPNQ), and 158 to 187 (KGFNTWDWAVFTGHADLVKSLNKDYQKPLF). The Nuclear localization signal signature appears at 81-87 (HYRRDKD). Positions 203-214 (KKKPKIIITSCE) match the Nuclear localization signal motif. The short motif at 206–213 (PKIIITSC) is the PxIxITxC motif; Interaction with host PPP3CA element. Positions 228–231 (FLCV) match the FLCV motif motif.

This sequence belongs to the asfivirus A238L family. Interacts with host PPIA. Interacts with host PPP3CA/Calcineurin. Interacts with host RELA/p65; interaction of the 32 kDa form with host RELA results in the formation of a stable complex with NF-kappa-B. Interacts with host PPP3R1. Interacts with host EP300; this interaction inhibits the association of host EP300 with host RELA, JUN and NFATC2. The protein exists in a 28 kDa and a 32 kDa form, probably due to post-translational modifications which are neither phosphorylation, nor sumoylation.

The protein localises to the host nucleus. Its subcellular location is the host cytoplasm. Its function is as follows. IkB-like protein that inhibits the binding of NF-kappa-B to DNA, thereby downregulating pro-inflammatory cytokine production. Forms a heterodimer with the NF-kappa-B subunit RELA/p65 and prevents the activation of the NF-kappa-B transcription factor. Inhibits calcineurin function, which is required for the induction of nuclear factor of activated T cells (NFAT)-dependent immune response genes. Prevents the binding of substrates to calcineurin without affecting the phosphatase activity. Does not contain the serine residues that are phosphorylated by host IkB kinase and thus is not degraded following stimulation of the NFkB pathway. In Ornithodoros (relapsing fever ticks), this protein is IkB-like protein (A238L).